A 219-amino-acid polypeptide reads, in one-letter code: MPLSHTTWAPYINAKLTPEQINNIKQFLDVQYQEQSIFPPKEKVFAALSMTSLDHTKVVIMGQDPYHGLGQAQGLSFSVPDAVPAPPSLQNILKELATDIGPRASHDLTSWAKQGVLLLNAVLTVPEGQANAHAGLVWEPLTDAIIQAVSDAGEPTVFILWGKFAQSKRRYIDESKHLVLTAAHPSPLSAYRGFFGSHPFSKANQFLTQNGRDSIHWLE.

The Proton acceptor role is filled by D64.

It belongs to the uracil-DNA glycosylase (UDG) superfamily. UNG family.

It localises to the cytoplasm. It carries out the reaction Hydrolyzes single-stranded DNA or mismatched double-stranded DNA and polynucleotides, releasing free uracil.. Excises uracil residues from the DNA which can arise as a result of misincorporation of dUMP residues by DNA polymerase or due to deamination of cytosine. The sequence is that of Uracil-DNA glycosylase from Leuconostoc citreum (strain KM20).